The sequence spans 447 residues: Phosphoglucosamine mutase (447 aa).

The Phosphoserine intermediate role is filled by Ser102. Positions 102, 241, 243, and 245 each coordinate Mg(2+). Ser102 is modified (phosphoserine).

The protein belongs to the phosphohexose mutase family. Requires Mg(2+) as cofactor. Post-translationally, activated by phosphorylation.

The enzyme catalyses alpha-D-glucosamine 1-phosphate = D-glucosamine 6-phosphate. Functionally, catalyzes the conversion of glucosamine-6-phosphate to glucosamine-1-phosphate. This is Phosphoglucosamine mutase from Pseudomonas syringae pv. tomato (strain ATCC BAA-871 / DC3000).